The following is a 334-amino-acid chain: L-lactate dehydrogenase B chain (334 aa).

N-acetylalanine is present on Ala2. The residue at position 7 (Lys7) is an N6-acetyllysine. Residues 30–58 and Arg100 each bind NAD(+); that span reads GQVG…LEDK. Ser44 bears the Phosphoserine mark. Position 58 is an N6-acetyllysine (Lys58). Arg107 is a binding site for substrate. Residue Lys119 is modified to N6-acetyllysine. Asn139 lines the NAD(+) pocket. The substrate site is built by Asn139 and Arg170. His194 acts as the Proton acceptor in catalysis. Phosphotyrosine is present on Tyr240. Residue Thr249 coordinates substrate. Residue Lys329 is modified to N6-acetyllysine.

It belongs to the LDH/MDH superfamily. LDH family. As to quaternary structure, homotetramer. Interacts with PTEN upstream reading frame protein MP31; the interaction leads to inhibition of mitochondrial lactate dehydrogenase activity, preventing conversion of lactate to pyruvate in mitochondria.

The protein resides in the cytoplasm. It is found in the mitochondrion inner membrane. The enzyme catalyses (S)-lactate + NAD(+) = pyruvate + NADH + H(+). Its pathway is fermentation; pyruvate fermentation to lactate; (S)-lactate from pyruvate: step 1/1. Functionally, interconverts simultaneously and stereospecifically pyruvate and lactate with concomitant interconversion of NADH and NAD(+). This chain is L-lactate dehydrogenase B chain (LDHB), found in Sus scrofa (Pig).